The primary structure comprises 78 residues: Large ribosomal subunit protein bL28 (78 aa).

The segment at 1–26 (MSAYCQVTGRKPSFGKSVSHSHRRTN) is disordered.

Belongs to the bacterial ribosomal protein bL28 family.

The protein is Large ribosomal subunit protein bL28 of Corynebacterium jeikeium (strain K411).